The following is a 448-amino-acid chain: MHFIAISINHRTADVALREQVAFRDDALRIAHEDLYETKSILENVILSTCNRTEVYAVVDQIHTGCYYIQRFLARAFGFEVDDIKAMSEVKVGDEAVEHLLRVTSGLDSIVLGETQILGQIRDAFFLAQSTGTTGTIFNHLFKQAITFAKRAHNETDIADNAVSVSYAAVELAKKVFGKLKSKQAIIIGAGEMSELSLLNLLGSGITDITVVNRTIENAMKLAAKHQVKYDELSSLPNLLESADIVISSTSAQTYIITNEMIERIAENRKQDSLVLIDIAVPRDIEPGISAITNIFNYDVDDLKGLVDANLRERQLAAATISEQIPAEIHAHNEWISMLGVVPVIRALREKAMAIQAETMDSIDRKLPGLSERERKIISKHTKSIINQMLKDPIKQAKELSSDKKSNEKLELFQNIFDIEAECPHEQAKQQKESKVKEISARRIFSFE.

Residues 49 to 52, Ser-109, 114 to 116, and Gln-120 each bind substrate; these read TCNR and ETQ. The active-site Nucleophile is the Cys-50. 189–194 is an NADP(+) binding site; that stretch reads GAGEMS.

Belongs to the glutamyl-tRNA reductase family. Homodimer.

It carries out the reaction (S)-4-amino-5-oxopentanoate + tRNA(Glu) + NADP(+) = L-glutamyl-tRNA(Glu) + NADPH + H(+). It participates in porphyrin-containing compound metabolism; protoporphyrin-IX biosynthesis; 5-aminolevulinate from L-glutamyl-tRNA(Glu): step 1/2. Catalyzes the NADPH-dependent reduction of glutamyl-tRNA(Glu) to glutamate 1-semialdehyde (GSA). This Staphylococcus aureus (strain bovine RF122 / ET3-1) protein is Glutamyl-tRNA reductase.